The sequence spans 124 residues: UPF0344 protein OB1184 (124 aa).

The next 4 membrane-spanning stretches (helical) occupy residues 3–23 (HMHI…LVMY), 33–53 (IIHM…GILT), 62–82 (MPIL…VAMM), and 104–124 (IALV…FLFI).

This sequence belongs to the UPF0344 family.

It is found in the cell membrane. The polypeptide is UPF0344 protein OB1184 (Oceanobacillus iheyensis (strain DSM 14371 / CIP 107618 / JCM 11309 / KCTC 3954 / HTE831)).